The primary structure comprises 853 residues: MSSGANITYASRKRRKPVQKTVKPVPAEGIKSNPSKRHRDRLNTELDRLASLLPFPQDVINKLDKLSVLRLSVSYLRAKSFFDVALKSTPADRSRGQDQCRAQVRDWQDLQEGEFLLQALNGFVLVVTADALVFYASSTIQDYLGFQQSDVIHQSVYELIHTEDRAEFQRQLHWALNPSQCTDSAQGVDETHGLPQPAVYYTPDQLPPENTAFMERCFRCRLRCLLDNSSGFLAMNFQGRLKYLHGQNKKGKDGALLPPQLALFAIATPLQPPSILEIRTKNFIFRTKHKLDFTPIGCDAKGQLILGYTEVELCNKGSGYQFIHAADMLHCAESHIRMIKTGESGMTVFRLLAKHSRWRWVQSNARLIYRNGRPDYIIATQRPLTDEEGREHLQKRSMTLPFMFATGEAVLYEISSPFSPIMDPLPIRTKSNTSRKDWAPQSTPSKDSFHPNSLMSALIQQDESIYLCPPSSPAPLDSHFLMDSMSECGSWQGSFAVASNEALLKHEEIRHTQDVNLTLSGGPSELFPDNKNNDLYSIMRNLGIDFEDIRSMQNEEFFRTDSSGEVDFKDIDITDEILTYVQDSLNNSTLLNSACQQQPVSQHLSCMLQERLQLEQQQQLQQQHPTQTLEPQRQLCQVEVPQHELGQKTKHMQVNGMFASWNPAPPVSFSCPQQERKHYSLFSGLQGTAQEFPYKSEVDSMPYTQNFAPCNQSLLPEHSKGTQLDFPGRDFERSLHPNASNLEDFVSCLQVPENQRHGINSQSAMVSPQAYYAGAMSMYQCQAGPQHTPVDQMQYSPEIPGSQAFLSKFQSPSILNEAYSADLSSIGHLQTAAHLPRLAEAQPLPDITPSGFL.

Positions 1 to 9 are excised as a propeptide; that stretch reads MSSGANITY. Residues 1 to 38 are disordered; that stretch reads MSSGANITYASRKRRKPVQKTVKPVPAEGIKSNPSKRH. 2 short sequence motifs (nuclear localization signal) span residues 12–15 and 36–41; these read RKRR and KRHRDR. In terms of domain architecture, bHLH spans 26–79; that stretch reads PAEGIKSNPSKRHRDRLNTELDRLASLLPFPQDVINKLDKLSVLRLSVSYLRAK. The tract at residues 37-65 is DNA-binding; it reads RHRDRLNTELDRLASLLPFPQDVINKLDK. 3 required for maintaining the overall integrity of the AHR:ARNT heterodimer and its transcriptional activity regions span residues 49–81, 116–124, and 264–266; these read LASL…AKSF, LLQALNGFV, and FAI. A Nuclear export signal motif is present at residues 63 to 71; that stretch reads LDKLSVLRL. The PAS 1 domain maps to 116–179; that stretch reads LLQALNGFVL…RQLHWALNPS (64 aa). A PAS 2 domain is found at 273–340; the sequence is PSILEIRTKN…CAESHIRMIK (68 aa). The 39-residue stretch at 346-384 folds into the PAC domain; that stretch reads MTVFRLLAKHSRWRWVQSNARLIYRNGRPDYIIATQRPL. The disordered stretch occupies residues 429-451; that stretch reads TKSNTSRKDWAPQSTPSKDSFHP. Positions 440-451 are enriched in polar residues; that stretch reads PQSTPSKDSFHP.

Homodimer. Heterodimer; efficient DNA binding requires dimerization with another bHLH protein. Interacts with ARNT; the heterodimer ARNT:AHR binds to core DNA sequence 5'-TGCGTG-3' within the dioxin response element (DRE) of target gene promoters and activates their transcription. Binds MYBBP1A. Interacts with coactivators including SRC-1, RIP140 and NOCA7, and with the corepressor SMRT. Interacts with NEDD8 and IVNS1ABP. Interacts with BMAL1. Interacts with HSP90AB1. Interacts with TIPARP; leading to mono-ADP-ribosylation of AHR and subsequent inhibition of AHR. Mono-ADP-ribosylated, leading to inhibit transcription activator activity of AHR. As to expression, expressed in all tissues tested including brain, heart, kidney, liver, lung, spleen, skeletal muscle and thymus.

The protein resides in the cytoplasm. It localises to the nucleus. Its function is as follows. Ligand-activated transcription factor that enables cells to adapt to changing conditions by sensing compounds from the environment, diet, microbiome and cellular metabolism, and which plays important roles in development, immunity and cancer. Upon ligand binding, translocates into the nucleus, where it heterodimerizes with ARNT and induces transcription by binding to xenobiotic response elements (XRE). Regulates a variety of biological processes, including angiogenesis, hematopoiesis, drug and lipid metabolism, cell motility and immune modulation. Xenobiotics can act as ligands: upon xenobiotic-binding, activates the expression of multiple phase I and II xenobiotic chemical metabolizing enzyme genes (such as the CYP1A1 gene). Mediates biochemical and toxic effects of halogenated aromatic hydrocarbons. Next to xenobiotics, natural ligands derived from plants, microbiota, and endogenous metabolism are potent AHR agonists. Tryptophan (Trp) derivatives constitute an important class of endogenous AHR ligands. Acts as a negative regulator of anti-tumor immunity: indoles and kynurenic acid generated by Trp catabolism act as ligand and activate AHR, thereby promoting AHR-driven cancer cell motility and suppressing adaptive immunity. Regulates the circadian clock by inhibiting the basal and circadian expression of the core circadian component PER1. Inhibits PER1 by repressing the CLOCK-BMAL1 heterodimer mediated transcriptional activation of PER1. The heterodimer ARNT:AHR binds to core DNA sequence 5'-TGCGTG-3' within the dioxin response element (DRE) of target gene promoters and activates their transcription. In Rattus norvegicus (Rat), this protein is Aryl hydrocarbon receptor (Ahr).